The sequence spans 360 residues: MKTSMQRKLDQLSTRLAELNDLLSRENVTADLDQYRKLTREHAELGPVVEQYALWRQSRSDETAAQELLADPSMRDFAEEEIRSARERMARLEVELQKMLLPKDPNDDRNIFVEIRAGTGGDESALFAGDLLRMYLRFAERQRWQVEMMSESPSDLGGYKEVIVRIAGQGAYSRLKFESGGHRVQRVPATETQGRIHTSACTVAVMPEADEIGEVEINLADLRIDTFRASGAGGQHINKTDSAVRVTHLPTGIVVECQDDRSQHKNKDRALKVLAARIKDKQYHEQHAKEAATRKSLIGSGDRSERIRTYNFPQGRMTDHRINLTLYRLEAIMDGDLDELIGALVSEHQAELLASLGDAD.

Residue Q235 is modified to N5-methylglutamine.

Belongs to the prokaryotic/mitochondrial release factor family. Post-translationally, methylated by PrmC. Methylation increases the termination efficiency of RF1.

It is found in the cytoplasm. Functionally, peptide chain release factor 1 directs the termination of translation in response to the peptide chain termination codons UAG and UAA. In Burkholderia multivorans (strain ATCC 17616 / 249), this protein is Peptide chain release factor 1.